The following is a 268-amino-acid chain: 4-hydroxy-tetrahydrodipicolinate reductase (268 aa).

NAD(+) is bound by residues 10-15 (GASGRM) and Asp36. Residue Arg37 coordinates NADP(+). NAD(+) is bound by residues 99 to 101 (GTT) and 123 to 126 (SANM). Catalysis depends on His156, which acts as the Proton donor/acceptor. Position 157 (His157) interacts with (S)-2,3,4,5-tetrahydrodipicolinate. Lys160 serves as the catalytic Proton donor. Residue 166-167 (GT) participates in (S)-2,3,4,5-tetrahydrodipicolinate binding.

It belongs to the DapB family.

It is found in the cytoplasm. The catalysed reaction is (S)-2,3,4,5-tetrahydrodipicolinate + NAD(+) + H2O = (2S,4S)-4-hydroxy-2,3,4,5-tetrahydrodipicolinate + NADH + H(+). It catalyses the reaction (S)-2,3,4,5-tetrahydrodipicolinate + NADP(+) + H2O = (2S,4S)-4-hydroxy-2,3,4,5-tetrahydrodipicolinate + NADPH + H(+). It participates in amino-acid biosynthesis; L-lysine biosynthesis via DAP pathway; (S)-tetrahydrodipicolinate from L-aspartate: step 4/4. Catalyzes the conversion of 4-hydroxy-tetrahydrodipicolinate (HTPA) to tetrahydrodipicolinate. The sequence is that of 4-hydroxy-tetrahydrodipicolinate reductase from Burkholderia mallei (strain NCTC 10247).